Consider the following 211-residue polypeptide: MSASNATHTHLSSSGGASQMATTQGHLTASAITLNFRELIKEPKGLEDAANYLFQGLLDDVVAGIFIEIHHLRKTGNLTALDGVGEENAESAYRICEMPNLDIFGISTAKKPMDCTCPHCDRLVAAARFAPHLEKCMGMGRISSRIASRRLATKEGASASSSSTSTYIQSGGNTGGTDDEDDVDWSSDKRKKKSTQNSRNNGSKKNNGKIF.

An SGF11-type zinc finger spans residues 115-136 (CTCPHCDRLVAAARFAPHLEKC). The disordered stretch occupies residues 153 to 211 (TKEGASASSSSTSTYIQSGGNTGGTDDEDDVDWSSDKRKKKSTQNSRNNGSKKNNGKIF). Residues 157-166 (ASASSSSTST) are compositionally biased toward low complexity. S187 is subject to Phosphoserine. Residues 197–211 (NSRNNGSKKNNGKIF) show a composition bias toward low complexity.

It belongs to the SGF11 family. Component of some SAGA transcription coactivator-HAT complexes, at least composed of Ada2b, not/nonstop, Pcaf/Gcn5, Sgf11 and Spt3. Within the SAGA complex, Sgf11, e(y)2, and not/nonstop form an additional subcomplex of SAGA called the DUB module (deubiquitination module). Interacts directly with not/nonstop. Interacts with the AMEX complex component xmas-2. Interacts with Cbp80; important for promoter recruitment of Sgf11 that is not associated with the DUB module.

It is found in the nucleus. Its subcellular location is the nucleoplasm. It localises to the cytoplasm. Component of the transcription regulatory histone acetylation (HAT) complex SAGA, a multiprotein complex that activates transcription by remodeling chromatin and mediating histone acetylation and deubiquitination. Within the SAGA complex, participates in a subcomplex that specifically deubiquitinates histone H2B. The SAGA complex is recruited to specific gene promoters by activators, where it is required for transcription. Required for nuclear receptor-mediated transactivation. Binds independently on SAGA to promoters in an RNA-dependent manner. Binds to mRNA and is essential for total mRNA export from the nucleus. Required to counteract heterochromatin silencing. Controls the development of neuronal connectivity in visual system by being required for accurate axon targeting in the optic lobe. Required for expression of ecdysone-induced genes such as br/broad. This chain is SAGA-associated factor 11 homolog, found in Drosophila mojavensis (Fruit fly).